The chain runs to 127 residues: Large ribosomal subunit protein bL20 (127 aa).

Belongs to the bacterial ribosomal protein bL20 family.

Functionally, binds directly to 23S ribosomal RNA and is necessary for the in vitro assembly process of the 50S ribosomal subunit. It is not involved in the protein synthesizing functions of that subunit. The polypeptide is Large ribosomal subunit protein bL20 (rplT) (Streptomyces coelicolor (strain ATCC BAA-471 / A3(2) / M145)).